The sequence spans 205 residues: UPF0548 protein At2g17695 (205 aa).

This sequence belongs to the UPF0548 family.

This chain is UPF0548 protein At2g17695, found in Arabidopsis thaliana (Mouse-ear cress).